Consider the following 141-residue polypeptide: Putative antiholin (141 aa).

Transmembrane regions (helical) follow at residues 4-24 (LSLS…SLIY), 32-52 (FVAA…GVGV), and 94-114 (VVVV…TALI).

Interacts with holin; this interaction this interaction blocks the holin homomultimerization and delays the host cell lysis.

The protein localises to the host cell inner membrane. Its function is as follows. Involved in lysis inhibition. Interacts with and inhibits the holin thereby delaying the host cell lysis timing. The polypeptide is Putative antiholin (lysA) (Enterobacteriaceae (Bacteriophage P2)).